We begin with the raw amino-acid sequence, 331 residues long: Reticulocalbin-1 (331 aa).

Residues 1 to 29 form the signal peptide; it reads MARGGRGRRLGLALGLLLALVLAPRVLRA. An N-linked (GlcNAc...) asparagine glycan is attached at Asn-53. The residue at position 55 (Ser-55) is a Phosphoserine. Thr-76 bears the Phosphothreonine mark. EF-hand domains are found at residues 79 to 114, 115 to 150, 166 to 201, 203 to 238, 244 to 279, and 280 to 315; these read ESKE…VQKR, YIFD…YYLG, KMLP…EEFE, MKEI…HEEN, WVLS…QDYD, and HAQA…FVGS. Position 80 is a phosphoserine; by FAM20C (Ser-80). Ca(2+) contacts are provided by Asp-92, Asp-94, Asp-96, Glu-103, Asp-128, Asp-130, Asp-132, Lys-134, Glu-139, Asp-179, Asn-181, Asp-183, Thr-185, Glu-190, Asp-216, Asn-218, Asp-220, Glu-227, Asp-257, Asn-259, Asp-261, Lys-263, Glu-268, Asp-293, Asn-295, Asp-297, Lys-299, and Glu-304. The short motif at 328–331 is the Prevents secretion from ER element; sequence HDEL.

Belongs to the CREC family. O-glycosylated. O-mannosylated by POMT1 and POMT2 and elongated by POMGNT1.

The protein localises to the endoplasmic reticulum lumen. Functionally, may regulate calcium-dependent activities in the endoplasmic reticulum lumen or post-ER compartment. The polypeptide is Reticulocalbin-1 (RCN1) (Homo sapiens (Human)).